A 1053-amino-acid polypeptide reads, in one-letter code: uncharacterized protein (1053 aa).

Belongs to the mycobacterial PPE family.

This is an uncharacterized protein from Mycobacterium tuberculosis (strain ATCC 25618 / H37Rv).